A 399-amino-acid polypeptide reads, in one-letter code: Alpha-ketoglutarate-dependent dioxygenase fc-dox (399 aa).

Histidine 158 and aspartate 160 together coordinate Fe cation. Threonine 203 is a 2-oxoglutarate binding site. Histidine 355 provides a ligand contact to Fe cation. Arginine 367 is a binding site for 2-oxoglutarate. The tract at residues 371–399 (QGWLAGDRPPKGPVPIPDPRARSSIYYQK) is disordered.

Belongs to the TfdA dioxygenase family. It depends on Fe(2+) as a cofactor.

It functions in the pathway mycotoxin biosynthesis. Functionally, alpha-ketoglutarate-dependent dioxygenase; part of the 2 gene clusters that mediate the biosynthesis of fusicoccins, diterpene glucosides that display phytohormone-like activity and function as potent activators of plasma membrane H(+)-ATPases in plants by modifying 14-3-3 proteins and cause the plant disease constriction canker. The first step in the pathway is performed by the fusicoccadiene synthase PaFS that possesses both prenyl transferase and terpene cyclase activity, converting isopentenyl diphosphate and dimethylallyl diphosphate into geranylgeranyl diphosphate (GGDP) and successively converting GGDP into fusicocca-2,10(14)-diene, a precursor for fusicoccin H. The second step is the oxidation at the C-8 position by the cytochrome P450 monooxygenase PaP450-2 to yield fusicocca-2,10(14)-diene-8-beta-ol. The cytochrome P450 monooxygenase PaP450-1 then catalyzes the hydroxylation at the C-16 position to produce fusicocca-2,10(14)-diene-8-beta,16-diol. The dioxygenase fc-dox then catalyzes the 16-oxydation of fusicocca-2,10(14)-diene-8-beta,16-diol to yield an aldehyde (8-beta-hydroxyfusicocca-1,10(14)-dien-16-al). The short-chain dehydrogenase/reductase fc-sdr catalyzes the reduction of the aldehyde to yield fusicocca-1,10(14)-diene-8-beta,16-diol. The next step is the hydroxylation at C-9 performed by the cytochrome P450 monooxygenase PaP450-3 that leads to fusicoccin H aglycon which is glycosylated to fusicoccin H by the O-glycosyltransferase PaGT. Hydroxylation at C-12 by the cytochrome P450 monooxygenase PaP450-4 leads then to the production of fusicoccin Q and is followed by methylation by the O-methyltransferase PaMT to yield fusicoccin P. Fusicoccin P is further converted to fusicoccin J via prenylation by the O-glucose prenyltransferase PaPT. Cytochrome P450 monooxygenase PaP450-5 then performs hydroxylation at C-19 to yield dideacetyl-fusicoccin A which is acetylated to 3'-O-deacetyl-fusicoccin A by the O-acetyltransferase PaAT-2. Finally, a another acetylation by the O-acetyltransferase PaAT-1 yields fusicoccin A. This is Alpha-ketoglutarate-dependent dioxygenase fc-dox from Phomopsis amygdali (Fusicoccum amygdali).